The sequence spans 190 residues: Peptidyl-tRNA hydrolase (190 aa).

Tyr18 serves as a coordination point for tRNA. His23 functions as the Proton acceptor in the catalytic mechanism. TRNA is bound by residues Phe67, Asn69, and Asn115.

The protein belongs to the PTH family. In terms of assembly, monomer.

Its subcellular location is the cytoplasm. It carries out the reaction an N-acyl-L-alpha-aminoacyl-tRNA + H2O = an N-acyl-L-amino acid + a tRNA + H(+). In terms of biological role, hydrolyzes ribosome-free peptidyl-tRNAs (with 1 or more amino acids incorporated), which drop off the ribosome during protein synthesis, or as a result of ribosome stalling. Functionally, catalyzes the release of premature peptidyl moieties from peptidyl-tRNA molecules trapped in stalled 50S ribosomal subunits, and thus maintains levels of free tRNAs and 50S ribosomes. This is Peptidyl-tRNA hydrolase from Leptospira interrogans serogroup Icterohaemorrhagiae serovar Lai (strain 56601).